We begin with the raw amino-acid sequence, 195 residues long: Probable molybdenum cofactor guanylyltransferase (195 aa).

Residues Leu6–Gly8, Lys18, Asp67, and Asp93 each bind GTP. Position 93 (Asp93) interacts with Mg(2+).

Belongs to the MobA family. Requires Mg(2+) as cofactor.

The protein localises to the cytoplasm. The catalysed reaction is Mo-molybdopterin + GTP + H(+) = Mo-molybdopterin guanine dinucleotide + diphosphate. Functionally, transfers a GMP moiety from GTP to Mo-molybdopterin (Mo-MPT) cofactor (Moco or molybdenum cofactor) to form Mo-molybdopterin guanine dinucleotide (Mo-MGD) cofactor. This chain is Probable molybdenum cofactor guanylyltransferase, found in Thermococcus sibiricus (strain DSM 12597 / MM 739).